The chain runs to 141 residues: Large ribosomal subunit protein bL17 (141 aa).

Positions 120–141 (TSAKGQDSGPVLTADEDEFEAA) are disordered.

The protein belongs to the bacterial ribosomal protein bL17 family. In terms of assembly, part of the 50S ribosomal subunit. Contacts protein L32.

The chain is Large ribosomal subunit protein bL17 from Novosphingobium aromaticivorans (strain ATCC 700278 / DSM 12444 / CCUG 56034 / CIP 105152 / NBRC 16084 / F199).